The primary structure comprises 332 residues: Eukaryotic translation initiation factor 3 subunit H (332 aa).

The MPN domain maps to V18 to M153. The disordered stretch occupies residues Q251 to F285.

It belongs to the eIF-3 subunit H family. Component of the eukaryotic translation initiation factor 3 (eIF-3) complex.

Its subcellular location is the cytoplasm. Functionally, component of the eukaryotic translation initiation factor 3 (eIF-3) complex, which is involved in protein synthesis of a specialized repertoire of mRNAs and, together with other initiation factors, stimulates binding of mRNA and methionyl-tRNAi to the 40S ribosome. The eIF-3 complex specifically targets and initiates translation of a subset of mRNAs involved in cell proliferation. The chain is Eukaryotic translation initiation factor 3 subunit H from Nematostella vectensis (Starlet sea anemone).